Consider the following 336-residue polypeptide: Protein FPV127 (336 aa).

The segment at 1 to 22 (MGGGLVLPTRDPPKEQDTSETA) is disordered.

Belongs to the poxviruses A16/G9/J5 family.

In Vertebrata (FPV), this protein is Protein FPV127.